The following is a 389-amino-acid chain: Apicidin F cluster transcription factor apf2 (389 aa).

Polar residues-rich tracts occupy residues 1 to 13 (MSPP…TITD) and 75 to 84 (PDSATPKPSL). Disordered stretches follow at residues 1–27 (MSPP…VAQR), 65–84 (PQSV…KPSL), and 219–239 (EVPN…TKQP). The segment at 12–38 (TDANERRKAQNRVAQRNYRSRQKLRVE) is basic DNA-binding region. ANK repeat units follow at residues 241 to 270 (EFKT…NIDT), 274 to 303 (HGRT…DLLM), 307 to 336 (SGVT…QQDR), and 357 to 386 (QNMT…DVNI).

It belongs to the bZIP family. Highly divergent.

It is found in the nucleus. Its function is as follows. Transcription factor that regulates the expression of the gene cluster that mediates the biosynthesis of apicidin F. Binds to the eight-base-pair motif 5'-TGACGTGA-3' called the 'Api-box' that is found in all promoters of the apicidin F cluster except in the promoter region of apf2 itself. The protein is Apicidin F cluster transcription factor apf2 of Gibberella fujikuroi (strain CBS 195.34 / IMI 58289 / NRRL A-6831) (Bakanae and foot rot disease fungus).